The primary structure comprises 137 residues: Small ribosomal subunit protein uS12 (137 aa).

Disordered regions lie at residues Met-1–Ser-21 and Val-34–Lys-57. Asp-102 carries the 3-methylthioaspartic acid modification.

Belongs to the universal ribosomal protein uS12 family. In terms of assembly, part of the 30S ribosomal subunit. Contacts proteins S8 and S17. May interact with IF1 in the 30S initiation complex.

Functionally, with S4 and S5 plays an important role in translational accuracy. Its function is as follows. Interacts with and stabilizes bases of the 16S rRNA that are involved in tRNA selection in the A site and with the mRNA backbone. Located at the interface of the 30S and 50S subunits, it traverses the body of the 30S subunit contacting proteins on the other side and probably holding the rRNA structure together. The combined cluster of proteins S8, S12 and S17 appears to hold together the shoulder and platform of the 30S subunit. The sequence is that of Small ribosomal subunit protein uS12 from Streptococcus uberis (strain ATCC BAA-854 / 0140J).